Consider the following 389-residue polypeptide: Glutamate 5-kinase (389 aa).

Position 17 (Lys-17) interacts with ATP. Residues Ser-57, Asp-144, and Asn-156 each coordinate substrate. ATP is bound at residue 176 to 177 (SD). Residues 282–359 (AGEIHVDAGA…NEIETILGYV (78 aa)) form the PUA domain.

The protein belongs to the glutamate 5-kinase family.

The protein localises to the cytoplasm. It carries out the reaction L-glutamate + ATP = L-glutamyl 5-phosphate + ADP. It functions in the pathway amino-acid biosynthesis; L-proline biosynthesis; L-glutamate 5-semialdehyde from L-glutamate: step 1/2. Functionally, catalyzes the transfer of a phosphate group to glutamate to form L-glutamate 5-phosphate. This chain is Glutamate 5-kinase, found in Agrobacterium fabrum (strain C58 / ATCC 33970) (Agrobacterium tumefaciens (strain C58)).